Here is a 164-residue protein sequence, read N- to C-terminus: Phosphopantetheine adenylyltransferase (164 aa).

Position 10 (S10) interacts with substrate. ATP contacts are provided by residues 10–11 (SF) and H18. K42, T79, and R93 together coordinate substrate. ATP contacts are provided by residues 94–96 (GLR), E104, and 129–135 (VRPIAAT).

It belongs to the bacterial CoaD family. As to quaternary structure, homohexamer. Requires Mg(2+) as cofactor.

It is found in the cytoplasm. It catalyses the reaction (R)-4'-phosphopantetheine + ATP + H(+) = 3'-dephospho-CoA + diphosphate. Its pathway is cofactor biosynthesis; coenzyme A biosynthesis; CoA from (R)-pantothenate: step 4/5. Its function is as follows. Reversibly transfers an adenylyl group from ATP to 4'-phosphopantetheine, yielding dephospho-CoA (dPCoA) and pyrophosphate. This is Phosphopantetheine adenylyltransferase from Bradyrhizobium sp. (strain BTAi1 / ATCC BAA-1182).